The sequence spans 92 residues: Small ribosomal subunit protein uS19 (92 aa).

Belongs to the universal ribosomal protein uS19 family.

Functionally, protein S19 forms a complex with S13 that binds strongly to the 16S ribosomal RNA. In Aeromonas hydrophila subsp. hydrophila (strain ATCC 7966 / DSM 30187 / BCRC 13018 / CCUG 14551 / JCM 1027 / KCTC 2358 / NCIMB 9240 / NCTC 8049), this protein is Small ribosomal subunit protein uS19.